Consider the following 693-residue polypeptide: Methionine--tRNA ligase (693 aa).

Positions 12 to 22 match the 'HIGH' region motif; it reads PYANGPLHLGH. Cys-143, Cys-146, Cys-156, and Cys-159 together coordinate Zn(2+). Residues 330-334 carry the 'KMSKS' region motif; that stretch reads KMSKS. Lys-333 contributes to the ATP binding site. A disordered region spans residues 557-576; that stretch reads APTAKNEAAKPAAPAAAKTE. Residues 590–693 form the tRNA-binding domain; sequence DFAKLDLRIG…SGAQPGMPVR (104 aa).

This sequence belongs to the class-I aminoacyl-tRNA synthetase family. MetG type 1 subfamily. Homodimer. Zn(2+) is required as a cofactor.

Its subcellular location is the cytoplasm. The enzyme catalyses tRNA(Met) + L-methionine + ATP = L-methionyl-tRNA(Met) + AMP + diphosphate. In terms of biological role, is required not only for elongation of protein synthesis but also for the initiation of all mRNA translation through initiator tRNA(fMet) aminoacylation. This chain is Methionine--tRNA ligase, found in Stenotrophomonas maltophilia (strain R551-3).